We begin with the raw amino-acid sequence, 58 residues long: U11-myrmicitoxin-Tb1a (58 aa).

Positions 1–24 are excised as a propeptide; sequence LAMAMGDAVADAQARAMAAAYAIA. Cysteines 34 and 57 form a disulfide.

Belongs to the formicidae venom precursor-01 superfamily. In terms of tissue distribution, expressed by the venom gland.

The protein resides in the secreted. It is found in the target cell membrane. Functionally, neurotoxin that causes irreversible rapid flaccid paralysis in blowflies and honeybees upon intrathoracic injection. Causes a quick and irreversible cytolytic effect (at 10 uM) indicating it possibly acts as a pore-forming peptide. Shows only weak effect on aphids (A.pisum) at high doses 24 hours post intrathoracic injection. In vitro, is not cytotoxic on the dipteran S2 Drosophila embryonic cell line. This is U11-myrmicitoxin-Tb1a from Tetramorium bicarinatum (Tramp ant).